We begin with the raw amino-acid sequence, 106 residues long: Pyrimidine/purine nucleoside phosphorylase (106 aa).

The protein belongs to the nucleoside phosphorylase PpnP family.

It carries out the reaction a purine D-ribonucleoside + phosphate = a purine nucleobase + alpha-D-ribose 1-phosphate. The enzyme catalyses adenosine + phosphate = alpha-D-ribose 1-phosphate + adenine. It catalyses the reaction cytidine + phosphate = cytosine + alpha-D-ribose 1-phosphate. The catalysed reaction is guanosine + phosphate = alpha-D-ribose 1-phosphate + guanine. It carries out the reaction inosine + phosphate = alpha-D-ribose 1-phosphate + hypoxanthine. The enzyme catalyses thymidine + phosphate = 2-deoxy-alpha-D-ribose 1-phosphate + thymine. It catalyses the reaction uridine + phosphate = alpha-D-ribose 1-phosphate + uracil. The catalysed reaction is xanthosine + phosphate = alpha-D-ribose 1-phosphate + xanthine. Functionally, catalyzes the phosphorolysis of diverse nucleosides, yielding D-ribose 1-phosphate and the respective free bases. Can use uridine, adenosine, guanosine, cytidine, thymidine, inosine and xanthosine as substrates. Also catalyzes the reverse reactions. This chain is Pyrimidine/purine nucleoside phosphorylase, found in Burkholderia vietnamiensis (strain G4 / LMG 22486) (Burkholderia cepacia (strain R1808)).